The primary structure comprises 892 residues: MLETILALLREILHREPSKEERQLFFTLLSSNFPVPPLDDWNTVAGIRLAVLGNPVESRRVDSCLKELSENKALKNVRSTLYVLRLLANQSKAFVLATPHNLLVQDNTQTTMQSAPLTTTKTNKLHGKSKHKSKKSIRSILFKDFDSTSEESDTETSAVEACMARIDQKETSTRLIPNESSGKLSKDTILEHAIVRDLIYAMQGLPGQYFELIKDPTSGISHFVLQRQYQSLSVSQTAATFCERIASCGFFYTRCTELLNAVTKTNMGKTRASLCEALHTGLSEYRQRISLLDSQLTEEQMTLVELTAVANLIREEISTLAVIADNCLYDKSLTSPQILNIIFGYSLHGDRKMHHIGQSLLIKASEPFFDYLKHWIIEGSLLSTEYFIQPTTSNSTDILILQTNNLLVSRSIFINSNWYNKFHISSSPDLKTHPLLSPYVTKLCFEIGRASAFLREDCNNITWRFPESIVALIREANFAKLLSSYSSDASEGTVKLIRSIHMLSSKAVVAIIKRQFLLFDHLNGILYILLGMQGDFIPSLCSILSSTSGGDKYKLSMLEKIEQAMMSCNVSNLPSHVLGCVDVRIDNSKSNFYVTYSIKDPLTSIITPGQIRIYETIFQIQWRLRSADDKLDQIILLTNFFYRRNTQQILTNAGRVGIFRLHYRTLTEEVPLAYTLYVARLSCIRNRTKQLVLALLNYISHDCIAPEYMTLFANLEAAETIKDIIYYHDIAVRTICYKMLISINYHKMADAPLPAPKESSGHHPRQLRSCDIYNGQVMFTDKTISIFSDFHTSLVKICAQIALLHGSVAELFNFQSIFTQDFTMKLQEAANFLDAYVRSFNTELNTMITCLQRCRSIPIPVLDEFDYSHYENLEASLLAVGMHSETHSSHKR.

This sequence belongs to the TUBGCP family. Component of the gamma-tubulin small complex (gamma-TuSC) composed of tubulin gamma chain, gamma-tubulin complex protein 2 (GCP2) and gamma-tubulin complex protein 3 (GCP3). Interacts with tubulin gamma chain.

It is found in the cytoplasm. The protein localises to the cytoskeleton. The protein resides in the flagellum axoneme. It localises to the flagellum basal body. Component of the gamma-tubulin small complex (gamma-TuSC) involved in microtubule (MT) nucleation for the formation of median bodies and in the biogenesis of flagella. Gamma-TuSC may be required for the correct positioning of EB1 within the trophozoites. This is Gamma-tubulin small complex component GCP3 from Giardia intestinalis (strain ATCC 50803 / WB clone C6) (Giardia lamblia).